A 150-amino-acid polypeptide reads, in one-letter code: MESKDASTSATSIDQLCKTFNLSLHTLQIQCVFCRNALTTAEIYAYAYKNLKVVWRDNFPFAACACCLELQGKINQYRHFNYAAYAPTVEEETNEDILKVLIRCYLCHKPLCEIEKLKHILGKARFIKLNNQWKGRCLHCWTTCMEDLLP.

Zinc fingers lie at residues 31–67 (CVFCRNALTTAEIYAYAYKNLKVVWRDNFPFAACACC) and 104–140 (CYLCHKPLCEIEKLKHILGKARFIKLNNQWKGRCLHC).

Belongs to the papillomaviridae E6 protein family. Forms homodimers. Interacts with ubiquitin-protein ligase UBE3A/E6-AP; this interaction stimulates UBE3A ubiquitin activity. Interacts with host TP53 and EP300; this interaction inhibits TP53 activity.

It is found in the host cytoplasm. The protein localises to the host nucleus. Plays a major role in the induction and maintenance of cellular transformation. E6 associates with host UBE3A/E6-AP ubiquitin-protein ligase and modulates its activity. Sequesters tumor suppressor TP53 in the host cytoplasm and modulates its activity by interacting with host EP300 that results in the reduction of TP53 acetylation and activation. In turn, apoptosis induced by DNA damage is inhibited. E6 also protects host keratinocytes from apoptosis by mediating the degradation of host BAK1. May also inhibit host immune response. The polypeptide is Protein E6 (Human papillomavirus 11).